The primary structure comprises 107 residues: Disintegrin lebestatin (107 aa).

An N-terminal signal peptide occupies residues 1–20; that stretch reads MIQVLLVIICLAVFPFQGSS. Positions 21–64 are excised as a propeptide; it reads KTLKSGNVNDYEVVNPGTVTGLPKGAVEEKHEPMKGNTLQKFPL. 4 disulfide bridges follow: cysteine 65–cysteine 74, cysteine 70–cysteine 93, cysteine 71–cysteine 98, and cysteine 83–cysteine 100. Residues 65–105 form the Disintegrin domain; sequence CTTGPCCRQCKLKPAGTTCWKTSRTSHYCTGKSCDCPSYPG. Residues 85 to 87 carry the Cell attachment site; atypical (KTS) motif; the sequence is KTS. Positions 106-107 are excised as a propeptide; it reads NG.

In terms of assembly, monomer. Expressed by the venom gland.

The protein localises to the secreted. In terms of biological role, specifically interacts with the alpha-1/beta-1 integrin (ITGA1/ITGB1). Exhibits highly inhibitory effects on cell adhesion and cell migration to collagens I and IV. Also shows in vivo anti-angiogenic activity. In Macrovipera lebetinus (Levantine viper), this protein is Disintegrin lebestatin.